The following is a 369-amino-acid chain: tRNA-specific 2-thiouridylase MnmA (369 aa).

Residues 7 to 14 (GISGGVDS) and Met-33 each bind ATP. An interaction with target base in tRNA region spans residues 93–95 (NPD). Residue Cys-98 is the Nucleophile of the active site. Cysteines 98 and 195 form a disulfide. Gly-123 provides a ligand contact to ATP. Residues 145–147 (KDQ) are interaction with tRNA. Residue Cys-195 is the Cysteine persulfide intermediate of the active site. The segment at 307-308 (RY) is interaction with tRNA.

Belongs to the MnmA/TRMU family. Interacts with TusE.

The protein resides in the cytoplasm. The catalysed reaction is S-sulfanyl-L-cysteinyl-[protein] + uridine(34) in tRNA + AH2 + ATP = 2-thiouridine(34) in tRNA + L-cysteinyl-[protein] + A + AMP + diphosphate + H(+). Catalyzes the 2-thiolation of uridine at the wobble position (U34) of tRNA(Lys), tRNA(Glu) and tRNA(Gln), leading to the formation of s(2)U34, the first step of tRNA-mnm(5)s(2)U34 synthesis. Sulfur is provided by IscS, via a sulfur-relay system. Binds ATP and its substrate tRNAs. The sequence is that of tRNA-specific 2-thiouridylase MnmA from Blochmanniella floridana.